We begin with the raw amino-acid sequence, 159 residues long: MSEIRTGLGWDVHRIATGRKMILGGVTVPCEFGLEGHSDADVLAHAITDAILGAAALGDIGMHFPDSDPRWKGCDSLVFLRHARDLATQKGYRIVNVDSTIILERPKLKDFRQTIRERLAETLELDVDRVSVKFKTAEKVGPVGEGRSAESQAIVTLEK.

A divalent metal cation-binding residues include aspartate 11 and histidine 13. 4-CDP-2-C-methyl-D-erythritol 2-phosphate-binding positions include 11–13 and 37–38; these read DVH and HS. Histidine 45 is an a divalent metal cation binding site. 4-CDP-2-C-methyl-D-erythritol 2-phosphate is bound by residues 59-61 and 64-68; these read DIG and FPDSD.

This sequence belongs to the IspF family. As to quaternary structure, homotrimer. The cofactor is a divalent metal cation.

It catalyses the reaction 4-CDP-2-C-methyl-D-erythritol 2-phosphate = 2-C-methyl-D-erythritol 2,4-cyclic diphosphate + CMP. It participates in isoprenoid biosynthesis; isopentenyl diphosphate biosynthesis via DXP pathway; isopentenyl diphosphate from 1-deoxy-D-xylulose 5-phosphate: step 4/6. Its function is as follows. Involved in the biosynthesis of isopentenyl diphosphate (IPP) and dimethylallyl diphosphate (DMAPP), two major building blocks of isoprenoid compounds. Catalyzes the conversion of 4-diphosphocytidyl-2-C-methyl-D-erythritol 2-phosphate (CDP-ME2P) to 2-C-methyl-D-erythritol 2,4-cyclodiphosphate (ME-CPP) with a corresponding release of cytidine 5-monophosphate (CMP). This Solibacter usitatus (strain Ellin6076) protein is 2-C-methyl-D-erythritol 2,4-cyclodiphosphate synthase.